We begin with the raw amino-acid sequence, 366 residues long: G-protein coupled receptor 183 (366 aa).

Over 1–37 the chain is Extracellular; that stretch reads MQVMRTFNQPPTSSHPTPTLNDSDTCITLYNHRGYAR. N-linked (GlcNAc...) asparagine glycosylation is present at N21. The helical transmembrane segment at 38–63 threads the bilayer; sequence VLMPLFYCIVFFVGLLGNALAFHIIR. Topologically, residues 64-83 are cytoplasmic; sequence PNVKKINSTTLYSANLVISD. Residues 84-101 traverse the membrane as a helical segment; sequence ILFTLSLPLRIIYYALGF. Residues 102-111 lie on the Extracellular side of the membrane; it reads HWPLGETLCK. The cysteines at positions 110 and 188 are disulfide-linked. The chain crosses the membrane as a helical span at residues 112–133; the sequence is IVGLIFYINTYAGVNFMTCLSV. Residues 134–155 lie on the Cytoplasmic side of the membrane; that stretch reads DRFIAVVLPLRFARFRKVSNVR. Residues 156–174 form a helical membrane-spanning segment; sequence YICVGVWLLVLMQTLPLLS. Topologically, residues 175–199 are extracellular; sequence MPMTNEEPDGFITCMEYPNFEPVPN. A helical membrane pass occupies residues 200–222; it reads ISYILIGAVFLGYGVPVVTILVC. Residues 223–248 are Cytoplasmic-facing; sequence YSILCCKLRLAAKANQLTDKSGRSQK. The helical transmembrane segment at 249-272 threads the bilayer; it reads AIGVICCVSLVFVVCFSPYHIDLL. Residues 273-292 are Extracellular-facing; it reads QYMIRKLIYTPDCAELTAFQ. The helical transmembrane segment at 293-317 threads the bilayer; that stretch reads ISLHFTVCLMNLNSCLDPFIYFFAC. The Cytoplasmic portion of the chain corresponds to 318-366; the sequence is KGYKTKVLKILKRQVSVSFSSAARTLPEGLSRDISDGNKIHLNSTRHKE.

This sequence belongs to the G-protein coupled receptor 1 family.

It localises to the cell membrane. G-protein coupled receptor expressed in lymphocytes that acts as a chemotactic receptor for B-cells, T-cells, splenic dendritic cells, monocytes/macrophages and astrocytes. Receptor for oxysterol 7-alpha,25-dihydroxycholesterol (7-alpha,25-OHC) and other related oxysterols. Mediates cell positioning and movement of a number of cells by binding the 7-alpha,25-OHC ligand that forms a chemotactic gradient. Binding of 7-alpha,25-OHC mediates the correct localization of B-cells during humoral immune responses. This chain is G-protein coupled receptor 183 (gpr183), found in Salmo salar (Atlantic salmon).